A 171-amino-acid chain; its full sequence is SWR1 complex subunit 6 (171 aa).

A disordered region spans residues 63–87; the sequence is DEDDDLGYLQKKQHKGSKRKTRQAK. The segment covering 73 to 85 has biased composition (basic residues); sequence KKQHKGSKRKTRQ. Zn(2+) contacts are provided by Cys-134, Cys-137, Cys-145, Cys-148, Cys-153, Cys-157, His-161, and Cys-166. An HIT-type zinc finger spans residues 134 to 166; it reads CSVCGYIAGYNCCLCGMRFCSIRCQNIHKDTRC.

It belongs to the ZNHIT1 family. In terms of assembly, homodimer. Component of the SWR1 chromatin-remodeling complex composed of at least ARP6/ESD1/SUF3, PIE1, SWC6, SWC2 and H2AZs (HTA8, HTA9, HTA11). Interacts directly with ARP6, PIE1 and SWC2. Interacts with FLX and SUF4, two component of the transcription activator complex FRI-C, and with ASHH2 and TAF14. In terms of tissue distribution, expressed in root, lateral root primordia, shoot apex, leaves, stems, inflorescences, flowers, axillary buds, developing siliques and premature seeds.

The protein localises to the nucleus speckle. It is found in the nucleus. Its function is as follows. Component of the SWR1 complex which mediates the ATP-dependent exchange of histone H2A for the H2A variant H2A.F/Z leading to transcriptional regulation of selected genes (e.g. FLC) by chromatin remodeling. Coodinates SWR1-C, FRI-C (FLC transcription activator complex), histone methyltransferase and general transcription factors. Represses flowering by positively regulating FLC and MAF4. Binds to the promoter region of FLC chromatin. The protein is SWR1 complex subunit 6 (SWC6) of Arabidopsis thaliana (Mouse-ear cress).